A 394-amino-acid polypeptide reads, in one-letter code: Ketoisovalerate oxidoreductase subunit VorA (394 aa).

In terms of assembly, heterotetramer of one alpha, one beta, one delta and one gamma chain.

The catalysed reaction is 3-methyl-2-oxobutanoate + 2 oxidized [2Fe-2S]-[ferredoxin] + CoA = 2-methylpropanoyl-CoA + 2 reduced [2Fe-2S]-[ferredoxin] + CO2 + H(+). In Pyrococcus horikoshii (strain ATCC 700860 / DSM 12428 / JCM 9974 / NBRC 100139 / OT-3), this protein is Ketoisovalerate oxidoreductase subunit VorA (vorA).